A 567-amino-acid chain; its full sequence is Potassium-transporting ATPase potassium-binding subunit (567 aa).

Transmembrane regions (helical) follow at residues 5–25 (GWLQILIYIGILLLLVKPLGG), 64–84 (TTYSISMLLFSLAGFLMLYFL), 136–156 (GFTVQNFVSAATGIALAIALI), 179–199 (LYVLLPACIVMTLVFVYLGVP), 254–274 (ISNLIQMLAIFAIGAALTNVF), 285–305 (WAILAAMGTLFIAGVIVTYWA), 328–350 (VRFGITMSSLFAVITTAASCGAV), 375–395 (IVGGVGAGFYGILMFVIIAIF), 421–441 (MLAVLCLPAGMLIFTAISVVL), 459–481 (ILYAYSSAAANNGSAFAGLSANT), 486–506 (ITLGVVMLIGRFLVIVPALAI), and 529–549 (LFVGLLVGTILIVGGLTFFPA).

The protein belongs to the KdpA family. In terms of assembly, the system is composed of three essential subunits: KdpA, KdpB and KdpC.

It is found in the cell inner membrane. Its function is as follows. Part of the high-affinity ATP-driven potassium transport (or Kdp) system, which catalyzes the hydrolysis of ATP coupled with the electrogenic transport of potassium into the cytoplasm. This subunit binds the periplasmic potassium ions and delivers the ions to the membrane domain of KdpB through an intramembrane tunnel. The polypeptide is Potassium-transporting ATPase potassium-binding subunit (Rhizobium rhizogenes (strain K84 / ATCC BAA-868) (Agrobacterium radiobacter)).